Here is a 520-residue protein sequence, read N- to C-terminus: Protein OS-9 homolog (520 aa).

A signal peptide spans Met-1–Ala-23. The segment covering Gln-121 to Ser-135 has biased composition (polar residues). The tract at residues Gln-121–Glu-144 is disordered. In terms of domain architecture, MRH spans Gly-161–Asp-302. Cys-163 and Cys-176 are oxidised to a cystine. Residues Trp-170, Trp-171, Gln-183, Asp-257, Arg-263, Glu-284, and Tyr-290 each coordinate a mannooligosaccharide derivative. 2 disulfide bridges follow: Cys-256-Cys-288 and Cys-271-Cys-300. The tract at residues Gly-442–Leu-520 is disordered. The segment covering Gly-461–Thr-471 has biased composition (polar residues). A compositionally biased stretch (basic and acidic residues) spans Asp-473–Lys-499. The Prevents secretion from ER motif lies at Lys-517 to Leu-520.

Belongs to the OS-9 family. As to quaternary structure, interacts with missfolded ER lumenal proteins.

Its subcellular location is the endoplasmic reticulum membrane. Lectin involved in the quality control of the secretory pathway. As a member of the endoplasmic reticulum-associated degradation lumenal (ERAD-L) surveillance system, targets misfolded endoplasmic reticulum lumenal glycoproteins for degradation. This is Protein OS-9 homolog (yos9) from Aspergillus fumigatus (strain ATCC MYA-4609 / CBS 101355 / FGSC A1100 / Af293) (Neosartorya fumigata).